The following is a 147-amino-acid chain: Large ribosomal subunit protein bL9 (147 aa).

It belongs to the bacterial ribosomal protein bL9 family.

Binds to the 23S rRNA. The polypeptide is Large ribosomal subunit protein bL9 (Clostridium botulinum (strain Alaska E43 / Type E3)).